The chain runs to 360 residues: Probable dual-specificity RNA methyltransferase RlmN (360 aa).

The Proton acceptor role is filled by E103. The 234-residue stretch at 109-342 (HEYGNSVCVT…VTIRREQGHD (234 aa)) folds into the Radical SAM core domain. Cysteines 116 and 347 form a disulfide. C123, C127, and C130 together coordinate [4Fe-4S] cluster. S-adenosyl-L-methionine is bound by residues 173 to 174 (GE), S205, 228 to 230 (SLH), and N304. The active-site S-methylcysteine intermediate is C347.

It belongs to the radical SAM superfamily. RlmN family. It depends on [4Fe-4S] cluster as a cofactor.

The protein resides in the cytoplasm. It catalyses the reaction adenosine(2503) in 23S rRNA + 2 reduced [2Fe-2S]-[ferredoxin] + 2 S-adenosyl-L-methionine = 2-methyladenosine(2503) in 23S rRNA + 5'-deoxyadenosine + L-methionine + 2 oxidized [2Fe-2S]-[ferredoxin] + S-adenosyl-L-homocysteine. It carries out the reaction adenosine(37) in tRNA + 2 reduced [2Fe-2S]-[ferredoxin] + 2 S-adenosyl-L-methionine = 2-methyladenosine(37) in tRNA + 5'-deoxyadenosine + L-methionine + 2 oxidized [2Fe-2S]-[ferredoxin] + S-adenosyl-L-homocysteine. In terms of biological role, specifically methylates position 2 of adenine 2503 in 23S rRNA and position 2 of adenine 37 in tRNAs. In Bacillus pumilus (strain SAFR-032), this protein is Probable dual-specificity RNA methyltransferase RlmN.